A 171-amino-acid polypeptide reads, in one-letter code: ATP synthase subunit b (171 aa).

The helical transmembrane segment at 24 to 44 (INLVIVIGVLYWFLKGFLGGI) threads the bilayer.

It belongs to the ATPase B chain family. In terms of assembly, F-type ATPases have 2 components, F(1) - the catalytic core - and F(0) - the membrane proton channel. F(1) has five subunits: alpha(3), beta(3), gamma(1), delta(1), epsilon(1). F(0) has four main subunits: a(1), b(1), b'(1) and c(10-14). The alpha and beta chains form an alternating ring which encloses part of the gamma chain. F(1) is attached to F(0) by a central stalk formed by the gamma and epsilon chains, while a peripheral stalk is formed by the delta, b and b' chains.

The protein resides in the cellular thylakoid membrane. Its function is as follows. F(1)F(0) ATP synthase produces ATP from ADP in the presence of a proton or sodium gradient. F-type ATPases consist of two structural domains, F(1) containing the extramembraneous catalytic core and F(0) containing the membrane proton channel, linked together by a central stalk and a peripheral stalk. During catalysis, ATP synthesis in the catalytic domain of F(1) is coupled via a rotary mechanism of the central stalk subunits to proton translocation. Component of the F(0) channel, it forms part of the peripheral stalk, linking F(1) to F(0). In Synechococcus sp. (strain WH7803), this protein is ATP synthase subunit b.